A 549-amino-acid chain; its full sequence is Cytoplasmic trehalase (549 aa).

Residues Arg-168, 175 to 176 (WD), Asn-212, 221 to 223 (RSQ), 292 to 294 (RDE), and Gly-324 each bind substrate. Active-site proton donor/acceptor residues include Asp-326 and Glu-509. A substrate-binding site is contributed by Glu-525.

It belongs to the glycosyl hydrolase 37 family. Monomer.

It localises to the cytoplasm. The enzyme catalyses alpha,alpha-trehalose + H2O = alpha-D-glucose + beta-D-glucose. It participates in glycan degradation; trehalose degradation; D-glucose from alpha,alpha-trehalose: step 1/1. Functionally, hydrolyzes trehalose to glucose. Could be involved, in cells returning to low osmolarity conditions, in the utilization of the accumulated cytoplasmic trehalose, which was synthesized in response to high osmolarity. The protein is Cytoplasmic trehalase of Escherichia fergusonii (strain ATCC 35469 / DSM 13698 / CCUG 18766 / IAM 14443 / JCM 21226 / LMG 7866 / NBRC 102419 / NCTC 12128 / CDC 0568-73).